The chain runs to 201 residues: Molybdenum cofactor guanylyltransferase (201 aa).

Residues 15 to 17 (LAG), Lys-28, Asp-74, and Asp-104 each bind GTP. Asp-104 contacts Mg(2+).

The protein belongs to the MobA family. As to quaternary structure, monomer. The cofactor is Mg(2+).

The protein localises to the cytoplasm. The catalysed reaction is Mo-molybdopterin + GTP + H(+) = Mo-molybdopterin guanine dinucleotide + diphosphate. Functionally, transfers a GMP moiety from GTP to Mo-molybdopterin (Mo-MPT) cofactor (Moco or molybdenum cofactor) to form Mo-molybdopterin guanine dinucleotide (Mo-MGD) cofactor. The chain is Molybdenum cofactor guanylyltransferase from Pseudomonas syringae pv. tomato (strain ATCC BAA-871 / DC3000).